Reading from the N-terminus, the 341-residue chain is L-threonine 3-dehydrogenase (341 aa).

Cys-38 is a Zn(2+) binding site. Residues Thr-40 and His-43 each act as charge relay system in the active site. Residues His-63, Glu-64, Cys-93, Cys-96, Cys-99, and Cys-107 each contribute to the Zn(2+) site. NAD(+) contacts are provided by residues Ile-175, Asp-195, Arg-200, 262–264, and 286–287; these read LGI and IY.

This sequence belongs to the zinc-containing alcohol dehydrogenase family. As to quaternary structure, homotetramer. Zn(2+) is required as a cofactor.

Its subcellular location is the cytoplasm. It catalyses the reaction L-threonine + NAD(+) = (2S)-2-amino-3-oxobutanoate + NADH + H(+). It functions in the pathway amino-acid degradation; L-threonine degradation via oxydo-reductase pathway; glycine from L-threonine: step 1/2. Its function is as follows. Catalyzes the NAD(+)-dependent oxidation of L-threonine to 2-amino-3-ketobutyrate. This Shewanella pealeana (strain ATCC 700345 / ANG-SQ1) protein is L-threonine 3-dehydrogenase.